Consider the following 255-residue polypeptide: Shieldin complex subunit 3 (255 aa).

Positions 33 to 88 (QDFPTHPLPRFIPWFPYDESKLPLKPERLPPVISEEAAESVKQYLAISEPGVKSQS) are sufficient for interaction with MAD2L2. The tract at residues 116–135 (QTNAAHLDKNSGKEKQHKQR) is disordered.

Component of the shieldin complex, consisting of SHLD1, SHLD2, SHLD3 and MAD2L2/REV7. Within the complex, SHLD2 forms a scaffold which interacts with a SHLD3-MAD2L2 subcomplex via its N-terminus, and with SHLD1 via its C-terminus. Interacts with ASTE1.

The protein resides in the chromosome. Component of the shieldin complex, which plays an important role in repair of DNA double-stranded breaks (DSBs). During G1 and S phase of the cell cycle, the complex functions downstream of TP53BP1 to promote non-homologous end joining (NHEJ) and suppress DNA end resection. Mediates various NHEJ-dependent processes including immunoglobulin class-switch recombination, and fusion of unprotected telomeres. The protein is Shieldin complex subunit 3 of Mus musculus (Mouse).